A 333-amino-acid chain; its full sequence is Syntaxin-4 (333 aa).

The Cytoplasmic portion of the chain corresponds to 1–312 (MGKDRLPELL…QHQKKARKKK (312 aa)). Low complexity predominate over residues 50-66 (YSVVSQNSHSCSNNNSS). The segment at 50–81 (YSVVSQNSHSCSNNNSSTEPKDRSSSKMTQYG) is disordered. Positions 91 to 116 (YTEIRQQLAQIAANLETMNRMAQTVN) form a coiled coil. Positions 239-301 (LREMMDRFNE…DKGADELDQA (63 aa)) constitute a t-SNARE coiled-coil homology domain. The helical; Anchor for type IV membrane protein transmembrane segment at 313-333 (IMLIVILAAVLLVLLLVGIYL) threads the bilayer.

The protein belongs to the syntaxin family.

It is found in the membrane. Potentially involved in docking of synaptic vesicles at presynaptic active zones. This Drosophila melanogaster (Fruit fly) protein is Syntaxin-4.